The primary structure comprises 245 residues: Octanoyltransferase (245 aa).

The BPL/LPL catalytic domain occupies 54–242; it reads QNAPEQVWLL…AFEQIFGPTI (189 aa). Substrate contacts are provided by residues 93-100, 173-175, and 186-188; these read RGGEFTYH, AIG, and GVS. Catalysis depends on Cys204, which acts as the Acyl-thioester intermediate.

This sequence belongs to the LipB family.

It localises to the cytoplasm. It carries out the reaction octanoyl-[ACP] + L-lysyl-[protein] = N(6)-octanoyl-L-lysyl-[protein] + holo-[ACP] + H(+). It functions in the pathway protein modification; protein lipoylation via endogenous pathway; protein N(6)-(lipoyl)lysine from octanoyl-[acyl-carrier-protein]: step 1/2. In terms of biological role, catalyzes the transfer of endogenously produced octanoic acid from octanoyl-acyl-carrier-protein onto the lipoyl domains of lipoate-dependent enzymes. Lipoyl-ACP can also act as a substrate although octanoyl-ACP is likely to be the physiological substrate. This chain is Octanoyltransferase, found in Bartonella quintana (strain Toulouse) (Rochalimaea quintana).